The chain runs to 361 residues: Isopentenyl-diphosphate delta-isomerase (361 aa).

12–13 lines the substrate pocket; it reads RK. FMN is bound by residues Ser-70, 71–73, Ser-101, and Asn-130; that span reads SMT. 101-103 is a binding site for substrate; sequence SMR. Residue Gln-165 participates in substrate binding. Glu-166 provides a ligand contact to Mg(2+). Residues Lys-197 and 310-311 each bind FMN; that span reads AG.

Belongs to the IPP isomerase type 2 family. In terms of assembly, homooctamer. Dimer of tetramers. FMN serves as cofactor. It depends on NADPH as a cofactor. Mg(2+) is required as a cofactor.

It localises to the cytoplasm. The enzyme catalyses isopentenyl diphosphate = dimethylallyl diphosphate. In terms of biological role, involved in the biosynthesis of isoprenoids. Catalyzes the 1,3-allylic rearrangement of the homoallylic substrate isopentenyl (IPP) to its allylic isomer, dimethylallyl diphosphate (DMAPP). The sequence is that of Isopentenyl-diphosphate delta-isomerase from Chlorobium luteolum (strain DSM 273 / BCRC 81028 / 2530) (Pelodictyon luteolum).